The sequence spans 243 residues: Proteasome subunit beta 1 (243 aa).

A compositionally biased stretch (polar residues) spans 1–14; it reads MRAPQHNSDFSRTV. The segment at 1 to 34 is disordered; that stretch reads MRAPQHNSDFSRTVDQLADDPNPYEPEIGSMPQN. The propeptide at 1–48 is removed in mature form; by autocatalysis; that stretch reads MRAPQHNSDFSRTVDQLADDPNPYEPEIGSMPQNDLTRADLDNVNKTG. The active-site Nucleophile is Thr-49.

The protein belongs to the peptidase T1B family. In terms of assembly, the 20S proteasome core is composed of 14 alpha and 14 beta subunits that assemble into four stacked heptameric rings, resulting in a barrel-shaped structure. The two inner rings, each composed of seven catalytic beta subunits, are sandwiched by two outer rings, each composed of seven alpha subunits. The catalytic chamber with the active sites is on the inside of the barrel. Has a gated structure, the ends of the cylinder being occluded by the N-termini of the alpha-subunits. Is capped at one or both ends by the proteasome regulatory ATPase, PAN.

It localises to the cytoplasm. The catalysed reaction is Cleavage of peptide bonds with very broad specificity.. With respect to regulation, the formation of the proteasomal ATPase PAN-20S proteasome complex, via the docking of the C-termini of PAN into the intersubunit pockets in the alpha-rings, triggers opening of the gate for substrate entry. Interconversion between the open-gate and close-gate conformations leads to a dynamic regulation of the 20S proteasome proteolysis activity. In terms of biological role, component of the proteasome core, a large protease complex with broad specificity involved in protein degradation. The sequence is that of Proteasome subunit beta 1 from Haloterrigena turkmenica (strain ATCC 51198 / DSM 5511 / JCM 9101 / NCIMB 13204 / VKM B-1734 / 4k) (Halococcus turkmenicus).